The primary structure comprises 342 residues: GTP 3',8-cyclase (342 aa).

In terms of domain architecture, Radical SAM core spans G18–A247. GTP is bound at residue R27. The [4Fe-4S] cluster site is built by C34 and C38. An S-adenosyl-L-methionine-binding site is contributed by Y40. C41 is a [4Fe-4S] cluster binding site. Residue R81 coordinates GTP. Residue G85 coordinates S-adenosyl-L-methionine. T112 is a GTP binding site. S136 contacts S-adenosyl-L-methionine. K173 provides a ligand contact to GTP. M207 lines the S-adenosyl-L-methionine pocket. Residues C270 and C273 each contribute to the [4Fe-4S] cluster site. A GTP-binding site is contributed by R275–R277. [4Fe-4S] cluster is bound at residue C287.

Belongs to the radical SAM superfamily. MoaA family. In terms of assembly, monomer and homodimer. The cofactor is [4Fe-4S] cluster.

The enzyme catalyses GTP + AH2 + S-adenosyl-L-methionine = (8S)-3',8-cyclo-7,8-dihydroguanosine 5'-triphosphate + 5'-deoxyadenosine + L-methionine + A + H(+). The protein operates within cofactor biosynthesis; molybdopterin biosynthesis. In terms of biological role, catalyzes the cyclization of GTP to (8S)-3',8-cyclo-7,8-dihydroguanosine 5'-triphosphate. This Aeromonas hydrophila subsp. hydrophila (strain ATCC 7966 / DSM 30187 / BCRC 13018 / CCUG 14551 / JCM 1027 / KCTC 2358 / NCIMB 9240 / NCTC 8049) protein is GTP 3',8-cyclase.